We begin with the raw amino-acid sequence, 235 residues long: Replication protein (235 aa).

A DNA-binding site is contributed by Tyr149.

The protein belongs to the Gram-positive plasmids replication protein type 1 family.

In terms of biological role, produces a single-strand nick in a specific site of the plasmid, and this nick results in single-strand replication by rolling circle mechanism. This chain is Replication protein (repB), found in Bacillus sp.